The sequence spans 510 residues: Putative folylpolyglutamate synthase (510 aa).

An ATP-binding site is contributed by 98-101; the sequence is GKGS. The Mg(2+) site is built by Ser122, Glu189, and His217. 2 residues coordinate ATP: Arg342 and Asp357.

It belongs to the folylpolyglutamate synthase family. A monovalent cation is required as a cofactor.

Its subcellular location is the mitochondrion inner membrane. It is found in the mitochondrion matrix. The protein resides in the cytoplasm. It catalyses the reaction (6S)-5,6,7,8-tetrahydrofolyl-(gamma-L-Glu)(n) + L-glutamate + ATP = (6S)-5,6,7,8-tetrahydrofolyl-(gamma-L-Glu)(n+1) + ADP + phosphate + H(+). It participates in cofactor biosynthesis; tetrahydrofolylpolyglutamate biosynthesis. Catalyzes conversion of folates to polyglutamate derivatives allowing concentration of folate compounds in the cell and the intracellular retention of these cofactors, which are important substrates for most of the folate-dependent enzymes that are involved in one-carbon transfer reactions involved in purine, pyrimidine and amino acid synthesis. This is Putative folylpolyglutamate synthase from Caenorhabditis elegans.